A 186-amino-acid polypeptide reads, in one-letter code: RNA-free ribonuclease P (186 aa).

It belongs to the HARP family.

It carries out the reaction Endonucleolytic cleavage of RNA, removing 5'-extranucleotides from tRNA precursor.. RNA-free RNase P that catalyzes the removal of the 5'-leader sequence from pre-tRNA to produce the mature 5'-terminus. In Hydrogenobaculum sp. (strain Y04AAS1), this protein is RNA-free ribonuclease P.